The chain runs to 525 residues: GMP synthase [glutamine-hydrolyzing] (525 aa).

The Glutamine amidotransferase type-1 domain maps to 8-207 (KILILDFGSQ…ALDICGCAAN (200 aa)). C85 serves as the catalytic Nucleophile. Catalysis depends on residues H181 and E183. A GMPS ATP-PPase domain is found at 208-400 (WKPSSIIEDA…LGLPYNMLYR (193 aa)). 235 to 241 (SGGVDSS) contacts ATP.

As to quaternary structure, homodimer.

It carries out the reaction XMP + L-glutamine + ATP + H2O = GMP + L-glutamate + AMP + diphosphate + 2 H(+). It participates in purine metabolism; GMP biosynthesis; GMP from XMP (L-Gln route): step 1/1. Its function is as follows. Catalyzes the synthesis of GMP from XMP. This is GMP synthase [glutamine-hydrolyzing] from Shewanella baltica (strain OS155 / ATCC BAA-1091).